A 402-amino-acid polypeptide reads, in one-letter code: Putative cytochrome P450 123 (402 aa).

Cysteine 350 provides a ligand contact to heme.

Belongs to the cytochrome P450 family. Heme serves as cofactor.

This is Putative cytochrome P450 123 (cyp123) from Mycobacterium bovis (strain ATCC BAA-935 / AF2122/97).